Reading from the N-terminus, the 283-residue chain is Shikimate dehydrogenase (NADP(+)) (283 aa).

Shikimate is bound by residues 16–18 and T63; that span reads SLS. Residue K67 is the Proton acceptor of the active site. D79 is a binding site for NADP(+). Shikimate is bound by residues N88 and D103. NADP(+) contacts are provided by residues 128-132, A223, and G243; that span reads GAGGA.

Belongs to the shikimate dehydrogenase family. In terms of assembly, homodimer.

It carries out the reaction shikimate + NADP(+) = 3-dehydroshikimate + NADPH + H(+). It participates in metabolic intermediate biosynthesis; chorismate biosynthesis; chorismate from D-erythrose 4-phosphate and phosphoenolpyruvate: step 4/7. Its function is as follows. Involved in the biosynthesis of the chorismate, which leads to the biosynthesis of aromatic amino acids. Catalyzes the reversible NADPH linked reduction of 3-dehydroshikimate (DHSA) to yield shikimate (SA). The sequence is that of Shikimate dehydrogenase (NADP(+)) from Xanthomonas campestris pv. campestris (strain B100).